Here is a 389-residue protein sequence, read N- to C-terminus: Putative phosphoserine aminotransferase (389 aa).

Position 45 (Arg-45) interacts with L-glutamate. Pyridoxal 5'-phosphate is bound by residues 79–80 (GT), Trp-114, Thr-169, Asp-191, and Gln-214. N6-(pyridoxal phosphate)lysine is present on Lys-215. 265-266 (NT) serves as a coordination point for pyridoxal 5'-phosphate.

It belongs to the class-V pyridoxal-phosphate-dependent aminotransferase family. SerC subfamily. In terms of assembly, homodimer. Pyridoxal 5'-phosphate is required as a cofactor.

It carries out the reaction O-phospho-L-serine + 2-oxoglutarate = 3-phosphooxypyruvate + L-glutamate. The enzyme catalyses 4-(phosphooxy)-L-threonine + 2-oxoglutarate = (R)-3-hydroxy-2-oxo-4-phosphooxybutanoate + L-glutamate. The protein operates within amino-acid biosynthesis; L-serine biosynthesis; L-serine from 3-phospho-D-glycerate: step 2/3. It functions in the pathway cofactor biosynthesis; pyridoxine 5'-phosphate biosynthesis; pyridoxine 5'-phosphate from D-erythrose 4-phosphate: step 3/5. Its function is as follows. Catalyzes the reversible conversion of 3-phosphohydroxypyruvate to phosphoserine and of 3-hydroxy-2-oxo-4-phosphonooxybutanoate to phosphohydroxythreonine. The polypeptide is Putative phosphoserine aminotransferase (Schizosaccharomyces pombe (strain 972 / ATCC 24843) (Fission yeast)).